The sequence spans 127 residues: Large ribosomal subunit protein bL20 (127 aa).

It belongs to the bacterial ribosomal protein bL20 family.

Binds directly to 23S ribosomal RNA and is necessary for the in vitro assembly process of the 50S ribosomal subunit. It is not involved in the protein synthesizing functions of that subunit. The polypeptide is Large ribosomal subunit protein bL20 (Renibacterium salmoninarum (strain ATCC 33209 / DSM 20767 / JCM 11484 / NBRC 15589 / NCIMB 2235)).